Consider the following 807-residue polypeptide: uncharacterized protein (807 aa).

The N-terminal stretch at 1–18 is a signal peptide; the sequence is MNTVLFVILLAAIGSNHG. Residues 19 to 704 lie on the Extracellular side of the membrane; sequence LIDERLTVNR…GLFTDIFGGE (686 aa). Polar residues predominate over residues 133 to 142; the sequence is TTTTAAPQTG. The tract at residues 133–171 is disordered; sequence TTTTAAPQTGNRRRRRAAGDEPNTDDNTPPNLEIPDWLD. Asparagine 277 and asparagine 660 each carry an N-linked (GlcNAc...) asparagine; by host glycan. The helical transmembrane segment at 705-725 threads the bilayer; the sequence is VWAVIAAIFSPVFLTAFALII. Residues 726–807 are Cytoplasmic-facing; it reads SLINFIPAVR…GERQVISRTN (82 aa).

Its subcellular location is the host membrane. This is an uncharacterized protein from Magallana gigas (Pacific oyster).